The chain runs to 509 residues: Maturase K (509 aa).

It belongs to the intron maturase 2 family. MatK subfamily.

It localises to the plastid. Its subcellular location is the chloroplast. Functionally, usually encoded in the trnK tRNA gene intron. Probably assists in splicing its own and other chloroplast group II introns. The chain is Maturase K from Nicotiana sylvestris (Wood tobacco).